We begin with the raw amino-acid sequence, 235 residues long: Uracil-DNA glycosylase (235 aa).

The Proton acceptor role is filled by aspartate 71.

This sequence belongs to the uracil-DNA glycosylase (UDG) superfamily. UNG family.

The protein localises to the cytoplasm. The catalysed reaction is Hydrolyzes single-stranded DNA or mismatched double-stranded DNA and polynucleotides, releasing free uracil.. Functionally, excises uracil residues from the DNA which can arise as a result of misincorporation of dUMP residues by DNA polymerase or due to deamination of cytosine. This is Uracil-DNA glycosylase from Campylobacter hominis (strain ATCC BAA-381 / DSM 21671 / CCUG 45161 / LMG 19568 / NCTC 13146 / CH001A).